Consider the following 75-residue polypeptide: UPF0352 protein plu2871 (75 aa).

The protein belongs to the UPF0352 family.

The protein is UPF0352 protein plu2871 of Photorhabdus laumondii subsp. laumondii (strain DSM 15139 / CIP 105565 / TT01) (Photorhabdus luminescens subsp. laumondii).